The following is a 306-amino-acid chain: MATSSELPDHLYEQMEAGQRLRNQGYRGRFAPSPTGPLHLGNLCTALVSWLQARLANGAWLLRVDDLDQPRNRVGAVESLQQDLHWLGLDWDGPVVFQSRRRGLYNSFLSALRRQGKLYACRCSRRMLADISAPAGRHLVYPGTCRDLELFWGWHEGRLPSWRLRVSKEFSHTSGDVILRRADGFIAYHLATVVDELTLGISEVVRGEDLLVAMNAQLALINEISARPVIYRHVPLLCDDQGRKLAKREGHAGLDSLRSEGLGPSHVVGWLAASQSLVPFGAELTAGELLSELKKKEGVLKSVLKP.

L-glutamate is bound by residues 29–33 and D65; that span reads RFAPS. The short motif at 32–42 is the 'HIGH' region element; sequence PSPTGPLHLGN. Residues C121, C123, Y141, and C145 each contribute to the Zn(2+) site. Y188 and R206 together coordinate L-glutamate. A 'KMSKS' region motif is present at residues 244 to 248; that stretch reads KLAKR. K247 contacts ATP.

This sequence belongs to the class-I aminoacyl-tRNA synthetase family. GluQ subfamily. Zn(2+) serves as cofactor.

Its function is as follows. Catalyzes the tRNA-independent activation of glutamate in presence of ATP and the subsequent transfer of glutamate onto a tRNA(Asp). Glutamate is transferred on the 2-amino-5-(4,5-dihydroxy-2-cyclopenten-1-yl) moiety of the queuosine in the wobble position of the QUC anticodon. This is Glutamyl-Q tRNA(Asp) synthetase from Prochlorococcus marinus (strain MIT 9303).